A 370-amino-acid polypeptide reads, in one-letter code: 3-isopropylmalate dehydrogenase (370 aa).

77-90 contacts NAD(+); the sequence is GPKWDSVPYEVRPE. Residues R97, R107, R135, and D226 each coordinate substrate. Mg(2+) is bound by residues D226, D250, and D254. 290–302 serves as a coordination point for NAD(+); sequence GSAPDIAGKGIAN.

The protein belongs to the isocitrate and isopropylmalate dehydrogenases family. LeuB type 1 subfamily. As to quaternary structure, homodimer. The cofactor is Mg(2+). Mn(2+) serves as cofactor.

The protein localises to the cytoplasm. The catalysed reaction is (2R,3S)-3-isopropylmalate + NAD(+) = 4-methyl-2-oxopentanoate + CO2 + NADH. It participates in amino-acid biosynthesis; L-leucine biosynthesis; L-leucine from 3-methyl-2-oxobutanoate: step 3/4. Functionally, catalyzes the oxidation of 3-carboxy-2-hydroxy-4-methylpentanoate (3-isopropylmalate) to 3-carboxy-4-methyl-2-oxopentanoate. The product decarboxylates to 4-methyl-2 oxopentanoate. The chain is 3-isopropylmalate dehydrogenase from Brucella suis biovar 1 (strain 1330).